We begin with the raw amino-acid sequence, 242 residues long: Proteasome subunit beta type-4 (242 aa).

A propeptide spanning residues 1–23 (ESVARGTAPGELHCFPGAGPVRH) is cleaved from the precursor. Catalysis depends on Thr-24, which acts as the Nucleophile.

This sequence belongs to the peptidase T1B family. The 26S proteasome consists of a 20S proteasome core and two 19S regulatory subunits. The 20S proteasome core is composed of 28 subunits that are arranged in four stacked rings, resulting in a barrel-shaped structure. The two end rings are each formed by seven alpha subunits, and the two central rings are each formed by seven beta subunits. The catalytic chamber with the active sites is on the inside of the barrel.

Its subcellular location is the cytoplasm. The protein resides in the nucleus. Its function is as follows. Non-catalytic component of the proteasome, a multicatalytic proteinase complex which is characterized by its ability to cleave peptides with Arg, Phe, Tyr, Leu, and Glu adjacent to the leaving group at neutral or slightly basic pH. The proteasome has an ATP-dependent proteolytic activity. The sequence is that of Proteasome subunit beta type-4 (psmb4) from Xenopus laevis (African clawed frog).